Here is an 827-residue protein sequence, read N- to C-terminus: Periplasmic nitrate reductase (827 aa).

A signal peptide (tat-type signal) is located at residues 1 to 34 (MSLTRRDFIKANAVPATAAAAGLATPAIAQPAKA). Residues 36-92 (IRWDKGVCRFCGTGCSVLVGVQDGRVVATQGDPDSPVNRGLNCIKGYFLSKIMYGED) form the 4Fe-4S Mo/W bis-MGD-type domain. Residues C43, C46, C50, and C78 each coordinate [4Fe-4S] cluster. Mo-bis(molybdopterin guanine dinucleotide)-binding positions include K80, Q148, N173, C177, 210–217 (WGSNMAEM), 241–245 (STFEH), 260–262 (QTD), M371, Q375, N481, 507–508 (SD), K530, D557, and 717–726 (TGRVLEHWHS). F793 contacts substrate. Mo-bis(molybdopterin guanine dinucleotide) contacts are provided by N801 and K818.

The protein belongs to the prokaryotic molybdopterin-containing oxidoreductase family. NasA/NapA/NarB subfamily. As to quaternary structure, component of the periplasmic nitrate reductase NapAB complex composed of NapA and NapB. [4Fe-4S] cluster serves as cofactor. The cofactor is Mo-bis(molybdopterin guanine dinucleotide). Predicted to be exported by the Tat system. The position of the signal peptide cleavage has not been experimentally proven.

It localises to the periplasm. It catalyses the reaction 2 Fe(II)-[cytochrome] + nitrate + 2 H(+) = 2 Fe(III)-[cytochrome] + nitrite + H2O. Catalytic subunit of the periplasmic nitrate reductase complex NapAB. Receives electrons from NapB and catalyzes the reduction of nitrate to nitrite. In Paramagnetospirillum magnetotacticum (Aquaspirillum magnetotacticum), this protein is Periplasmic nitrate reductase.